Reading from the N-terminus, the 265-residue chain is 4-hydroxy-tetrahydrodipicolinate reductase (265 aa).

NAD(+) contacts are provided by residues 7–12 (GASGRM), Asp33, 96–98 (GTT), and 120–123 (AANF). His153 acts as the Proton donor/acceptor in catalysis. Residue His154 participates in (S)-2,3,4,5-tetrahydrodipicolinate binding. Residue Lys157 is the Proton donor of the active site. Position 163–164 (163–164 (GT)) interacts with (S)-2,3,4,5-tetrahydrodipicolinate.

This sequence belongs to the DapB family.

Its subcellular location is the cytoplasm. It catalyses the reaction (S)-2,3,4,5-tetrahydrodipicolinate + NAD(+) + H2O = (2S,4S)-4-hydroxy-2,3,4,5-tetrahydrodipicolinate + NADH + H(+). The enzyme catalyses (S)-2,3,4,5-tetrahydrodipicolinate + NADP(+) + H2O = (2S,4S)-4-hydroxy-2,3,4,5-tetrahydrodipicolinate + NADPH + H(+). It participates in amino-acid biosynthesis; L-lysine biosynthesis via DAP pathway; (S)-tetrahydrodipicolinate from L-aspartate: step 4/4. In terms of biological role, catalyzes the conversion of 4-hydroxy-tetrahydrodipicolinate (HTPA) to tetrahydrodipicolinate. This chain is 4-hydroxy-tetrahydrodipicolinate reductase, found in Cupriavidus taiwanensis (strain DSM 17343 / BCRC 17206 / CCUG 44338 / CIP 107171 / LMG 19424 / R1) (Ralstonia taiwanensis (strain LMG 19424)).